The following is an 89-amino-acid chain: Small ribosomal subunit protein bS20 (89 aa).

A disordered region spans residues Met1–Ser28.

It belongs to the bacterial ribosomal protein bS20 family.

Binds directly to 16S ribosomal RNA. In Mannheimia succiniciproducens (strain KCTC 0769BP / MBEL55E), this protein is Small ribosomal subunit protein bS20.